The sequence spans 642 residues: Triacylglycerol lipase 3 (642 aa).

Residues 204–392 (LILQGGSLFG…NEIEPFLNIN (189 aa)) enclose the PNPLA domain. The GXSXG signature appears at 235-239 (GSSMG). The active-site Nucleophile is Ser-237. An HXXXXD acyltransferase motif motif is present at residues 298 to 303 (HGYSQD). The active-site Proton acceptor is the Glu-403. Residues 471–481 (RKTQRSSSQSP) show a composition bias toward polar residues. The segment at 471–502 (RKTQRSSSQSPIKAGTVEDLEPEPLMSPVPPS) is disordered.

Its subcellular location is the lipid droplet. It carries out the reaction a triacylglycerol + H2O = a diacylglycerol + a fatty acid + H(+). The catalysed reaction is 1,2,3-tri-(9Z-octadecenoyl)-glycerol + H2O = di-(9Z)-octadecenoylglycerol + (9Z)-octadecenoate + H(+). It catalyses the reaction di-(9Z)-octadecenoylglycerol + H2O = (9Z-octadecenoyl)-glycerol + (9Z)-octadecenoate + H(+). The enzyme catalyses a 1-acyl-sn-glycero-3-phosphoethanolamine + (9Z)-octadecenoyl-CoA = 1-acyl-2-(9Z)-octadecenoyl-sn-glycero-3-phosphoethanolamine + CoA. It carries out the reaction a 1-acyl-sn-glycero-3-phosphoethanolamine + hexadecanoyl-CoA = 1-acyl-2-hexadecanoyl-sn-glycero-3-phosphoethanolamine + CoA. Loses its lipolytic activity in cells lacking nonpolar lipids. Functionally, lipid particle-localized triacylglycerol (TAG) lipase. The lipid droplet/particle is a lipid storage compartment which serves as a depot of energy and building blocks for membrane lipid biosynthesis. Involved in the mobilization of the non-polar storage lipids triacylglycerols (TAGs) from lipid particles by hydrolysis of TAGs, releasing and supplying specific fatty acids to the appropriate metabolic pathways. Also catalyzes the acylation of lysophosphatidic acid (LPA). Important for efficient sporulation, but rather through its acyltransferase than lipase activity. This is Triacylglycerol lipase 3 (TGL3) from Saccharomyces cerevisiae (strain ATCC 204508 / S288c) (Baker's yeast).